The primary structure comprises 149 residues: MSITPGTYNITNVAYTNRLIDLTGSNPAENTLIIGHHLNKTPSGYGNQQWTLVQLPHTTIYTMQAVNPQSYVRVRDDNLVDGAALVGSQQPTPVSIESAGNSGQFRIKIPNLGLALTLPSDANSTPIVLGEVDETSTNQLWAFESVSAV.

An N-acetylserine modification is found at S2. D21, G24, N39, and N47 together coordinate a carbohydrate. Positions 110–112 (PNL) are involved in dimerization.

In terms of assembly, homodimer. The N-terminus is blocked.

Lectin specific for terminal, non-reducing N-acetylgalactosamine (Gal-NAc)-containing carbohydrates including N,N'-diacetyllactosediamine/LDN (GalNAcbeta1-4GlcNAc, LacdiNAc). Specific also for carbohydrates containing N-acetylglucosamine (-GlcNAc) or N-acetyllactosamine (-Galbeta1-4GlcNAc) at the reducing end. Agglutinates human blood group A, AB, B and O erythrocytes with a strong preference for group A. Agglutinates bovine erythrocytes with a very low specificity. Binds carbohydrates bivalently, which is required for its biological activity. Exhibits insecticidal activity against the fruit fly D.melanogaster, mosquito A.aegypti, and amoebozoa A.castellanii. Has anti-nutritional activity against Colorado potato beetle L.decemlineata, and against worm C.elegans. Has antiproliferative activity against human leukemic T-cells. Has an immunostimulatory effect on human antigen-presenting dendritic cells, which are subsequently able to induce efficient T-cell immune responses. The sequence is that of Ricin B-like lectin from Clitocybe nebularis (Clouded agaric).